The primary structure comprises 729 residues: Catalase-peroxidase (729 aa).

Positions 95–217 (WHSAGTYRIT…LAAVQMGLIY (123 aa)) form a cross-link, tryptophyl-tyrosyl-methioninium (Trp-Tyr) (with M-243). The Proton acceptor role is filled by histidine 96. Positions 217-243 (YVNPEGPNGKPDPIAAATDIRETFFRM) form a cross-link, tryptophyl-tyrosyl-methioninium (Tyr-Met) (with W-95). Residue histidine 258 coordinates heme b.

Belongs to the peroxidase family. Peroxidase/catalase subfamily. In terms of assembly, homodimer or homotetramer. It depends on heme b as a cofactor. Post-translationally, formation of the three residue Trp-Tyr-Met cross-link is important for the catalase, but not the peroxidase activity of the enzyme.

The catalysed reaction is H2O2 + AH2 = A + 2 H2O. It carries out the reaction 2 H2O2 = O2 + 2 H2O. Its function is as follows. Bifunctional enzyme with both catalase and broad-spectrum peroxidase activity. The sequence is that of Catalase-peroxidase from Nitrobacter hamburgensis (strain DSM 10229 / NCIMB 13809 / X14).